Reading from the N-terminus, the 124-residue chain is Group 1 truncated hemoglobin GlbN (124 aa).

3 residues coordinate heme: His46, His70, and His117.

This sequence belongs to the truncated hemoglobin family. Group I subfamily. In terms of assembly, monomer. It depends on heme as a cofactor.

Its function is as follows. Forms a very stable complex with oxygen. The oxygen dissociation rate is 0.011 sec(-1). The polypeptide is Group 1 truncated hemoglobin GlbN (glbN) (Synechocystis sp. (strain ATCC 27184 / PCC 6803 / Kazusa)).